The chain runs to 84 residues: U21-theraphotoxin-Cg1a 2 (84 aa).

Residues 1 to 21 (MKVSVLITLAVLGVMFLFTSA) form the signal peptide. The propeptide occupies 22–47 (EERGSDQMDSPAWLKSMEIIFQSEER). Intrachain disulfides connect C49–C63, C56–C68, and C62–C76. A Valine amide modification is found at V82.

The protein belongs to the neurotoxin 10 (Hwtx-1) family. 05 (F4a) subfamily. In terms of tissue distribution, expressed by the venom gland.

Its subcellular location is the secreted. Its function is as follows. Probable ion channel inhibitor. In Chilobrachys guangxiensis (Chinese earth tiger tarantula), this protein is U21-theraphotoxin-Cg1a 2.